A 158-amino-acid chain; its full sequence is Endoribonuclease YbeY (158 aa).

3 residues coordinate Zn(2+): histidine 122, histidine 126, and histidine 132.

It belongs to the endoribonuclease YbeY family. Zn(2+) serves as cofactor.

The protein resides in the cytoplasm. In terms of biological role, single strand-specific metallo-endoribonuclease involved in late-stage 70S ribosome quality control and in maturation of the 3' terminus of the 16S rRNA. The protein is Endoribonuclease YbeY of Bacillus licheniformis (strain ATCC 14580 / DSM 13 / JCM 2505 / CCUG 7422 / NBRC 12200 / NCIMB 9375 / NCTC 10341 / NRRL NRS-1264 / Gibson 46).